Consider the following 1121-residue polypeptide: Myelin transcription factor 1 (1121 aa).

2 disordered regions span residues 1–156 (MSLE…SKGS) and 200–376 (EAAE…MTRG). The segment at 21 to 64 (PETTAADLSCPTPGCTGSGHVRGKYSRHRSLQSCPLAKKRKLEG) adopts a CCHHC-type 1 zinc-finger fold. The Zn(2+) site is built by Cys30, Cys35, His48, and Cys54. Over residues 41–50 (VRGKYSRHRS) the composition is skewed to basic residues. Composition is skewed to basic and acidic residues over residues 62-71 (LEGAEAEHLV) and 123-132 (DEIHRPETAE). The span at 147–156 (GSATASSKGS) shows a compositional bias: low complexity. The segment covering 258–308 (EEEDEEEEEEEEEEEEDEEEEEEEEEEEEEEEEEEEEEEEEEEEEEEEEAA) has biased composition (acidic residues). The span at 346 to 358 (VRSDDDKDEDTHS) shows a compositional bias: basic and acidic residues. 2 consecutive CCHHC-type zinc fingers follow at residues 433–476 (SRAE…PPEI) and 477–520 (LAMH…KLAK). Zn(2+)-binding residues include Cys442, Cys447, His460, Cys466, Cys486, Cys491, His504, and Cys510. Disordered regions lie at residues 517–540 (KLAK…SNSD) and 668–774 (TLDL…EERK). A compositionally biased stretch (polar residues) spans 526–540 (QPQTGDPSKSSSNSD). The segment covering 705-723 (SSTSAPSSSMTSPQSSQAS) has biased composition (low complexity). The span at 724–733 (RQDEWDRPLD) shows a compositional bias: basic and acidic residues. Over residues 759-770 (EADDQEVSEENF) the composition is skewed to acidic residues. 4 consecutive CCHHC-type zinc fingers follow at residues 791 to 834 (KDIK…LRNL), 835 to 878 (MAAH…GVKV), 884 to 927 (DKED…QKEG), and 937 to 980 (KSLK…GKKG). Residues Cys800, Cys805, His818, Cys824, Cys844, Cys849, His862, Cys868, Cys893, Cys898, His911, Cys917, Cys946, Cys951, His964, and Cys970 each coordinate Zn(2+).

The protein belongs to the MYT1 family. In terms of assembly, interacts with STEAP3. In terms of tissue distribution, mostly in developing nervous system. Expressed in neural progenitors and oligodendrocyte lineage cells. More highly expressed in oligodendrocyte progenitors than in differentiated oligodendrocytes.

It is found in the nucleus. In terms of biological role, binds to the promoter region of genes encoding proteolipid proteins of the central nervous system. May play a role in the development of neurons and oligodendroglia in the CNS. May regulate a critical transition point in oligodendrocyte lineage development by modulating oligodendrocyte progenitor proliferation relative to terminal differentiation and up-regulation of myelin gene transcription. The polypeptide is Myelin transcription factor 1 (MYT1) (Homo sapiens (Human)).